We begin with the raw amino-acid sequence, 114 residues long: Peroxisomal biogenesis factor 39 (114 aa).

2 disordered regions span residues 1–26 (MSWW…AEPA) and 53–114 (ITAT…PRVS). Serine 102 carries the post-translational modification Phosphoserine.

It localises to the peroxisome. Functionally, may be a peroxin involved in the PTS2-mediated protein import pathway. The protein is Peroxisomal biogenesis factor 39 (Pex39) of Mus musculus (Mouse).